A 396-amino-acid chain; its full sequence is Elongation factor Tu (396 aa).

Residues 10–205 enclose the tr-type G domain; sequence KSHANIGTIG…AVDEYIPTPE (196 aa). Residues 19-26 form a G1 region; it reads GHVDHGKT. 19-26 serves as a coordination point for GTP; sequence GHVDHGKT. Threonine 26 serves as a coordination point for Mg(2+). The interval 61-65 is G2; sequence GITIS. The interval 82-85 is G3; that stretch reads DCPG. GTP is bound by residues 82–86 and 137–140; these read DCPGH and NKCD. Positions 137-140 are G4; the sequence is NKCD. Residues 175 to 177 form a G5 region; it reads SAL. A Phosphothreonine modification is found at threonine 385.

This sequence belongs to the TRAFAC class translation factor GTPase superfamily. Classic translation factor GTPase family. EF-Tu/EF-1A subfamily. Monomer. Interacts with BrxC. Post-translationally, phosphorylated on Thr-385 in vitro by PrkC in the presence of poly-L-lysine or myelin basic protein, dephosphorylated by PrpC.

It localises to the cytoplasm. It catalyses the reaction GTP + H2O = GDP + phosphate + H(+). Its function is as follows. GTP hydrolase that promotes the GTP-dependent binding of aminoacyl-tRNA to the A-site of ribosomes during protein biosynthesis. This chain is Elongation factor Tu, found in Bacillus subtilis (strain 168).